A 431-amino-acid polypeptide reads, in one-letter code: Nocturnin (431 aa).

The N-terminal 75 residues, 1 to 75 (MFHSPRRLCS…SMGTGTSRLY (75 aa)), are a transit peptide targeting the mitochondrion. Positions 20 to 31 (LRRLPAPGLRRP) are enriched in low complexity. A disordered region spans residues 20–41 (LRRLPAPGLRRPLSPPAAVPRP). Residues 32 to 41 (LSPPAAVPRP) are compositionally biased toward pro residues. Residue E195 coordinates Mg(2+). Residues E195, 219–221 (KPW), N263, 286–289 (HLKA), and 324–326 (DFN) contribute to the substrate site. The interval 343-353 (NLNSAYKLLSA) is interaction with PPARG. Residue H414 participates in substrate binding.

This sequence belongs to the CCR4/nocturin family. As to quaternary structure, interacts with PPARG. It depends on Mg(2+) as a cofactor. As to expression, adipose tissue. Expression is higher in subcutaneous adipose tissue as compared to visceral adipose tissue.

The protein resides in the cytoplasm. It localises to the nucleus. Its subcellular location is the perinuclear region. The protein localises to the mitochondrion. It catalyses the reaction NADP(+) + H2O = phosphate + NAD(+). It carries out the reaction NADPH + H2O = phosphate + NADH. Its function is as follows. Phosphatase which catalyzes the conversion of NADP(+) to NAD(+) and of NADPH to NADH. Shows a small preference for NADPH over NADP(+). Represses translation and promotes degradation of target mRNA molecules. Plays an important role in post-transcriptional regulation of metabolic genes under circadian control. Exerts a rhythmic post-transcriptional control of genes necessary for metabolic functions including nutrient absorption, glucose/insulin sensitivity, lipid metabolism, adipogenesis, inflammation and osteogenesis. Plays an important role in favoring adipogenesis over osteoblastogenesis and acts as a key regulator of the adipogenesis/osteogenesis balance. Promotes adipogenesis by facilitating PPARG nuclear translocation which activates its transcriptional activity. Regulates circadian expression of NOS2 in the liver and negatively regulates the circadian expression of IGF1 in the bone. Critical for proper development of early embryos. The protein is Nocturnin of Homo sapiens (Human).